The sequence spans 773 residues: Preaspterpenacid I synthase sttA (773 aa).

The tract at residues 4–359 (ISDVMKHCVP…RYHRTDLATT (356 aa)) is sesterterpenoid synthase. Residue Asp105 participates in Mg(2+) binding. Asp105 contacts substrate. The substrate stretch occupies residues 211-214 (RVNE). Asn255 lines the substrate pocket. 2 substrate regions span residues 259–263 (SFPKE) and 350–351 (RY). A geranylfarnesyl diphosphate synthase region spans residues 360–769 (AEDRATLIGK…RMMLLGMGPK (410 aa)). The segment at 423–447 (AFKKRNSRNGKQNGTEGSKSTFTNG) is disordered. Over residues 431-447 (NGKQNGTEGSKSTFTNG) the composition is skewed to polar residues. The isopentenyl diphosphate site is built by Lys493, Arg496, and His525. Residues Asp532 and Asp536 each contribute to the Mg(2+) site. Arg541 contacts dimethylallyl diphosphate. Residue Arg542 coordinates isopentenyl diphosphate. Residues Lys614, Thr615, Gln652, Asn659, and Lys669 each coordinate dimethylallyl diphosphate.

The protein in the N-terminal section; belongs to the terpene synthase family. This sequence in the C-terminal section; belongs to the FPP/GGPP synthase family.

It carries out the reaction 4 isopentenyl diphosphate + dimethylallyl diphosphate = (2E,6E,10E,14E)-geranylfarnesyl diphosphate + 4 diphosphate. The catalysed reaction is (2E,6E,10E,14E)-geranylfarnesyl diphosphate + H2O = preaspterpenacid acid I + diphosphate. The protein operates within secondary metabolite biosynthesis; terpenoid biosynthesis. Functionally, sesterterpenoid synthase; part of the gene cluster that mediates the biosynthesis of aspterpenacids. Performs both prenyl transferase and terpene cyclase activity, converting isopentenyl diphosphate and dimethylallyl diphosphate into geranylfarnesyl diphosphate (GFPP) and then converting GFPP into preaspterpenacid I. C22-oxidative modification of preaspterpenacid I by the cytochrome P450 monooxygenase sttB then leads to preaspterpenacid II. It has still to be determined how preaspterpenacid II is further modified to produce aspterpenacids. This is Preaspterpenacid I synthase sttA from Aspergillus terreus (strain NIH 2624 / FGSC A1156).